We begin with the raw amino-acid sequence, 93 residues long: Integration host factor subunit beta (93 aa).

Belongs to the bacterial histone-like protein family. As to quaternary structure, heterodimer of an alpha and a beta chain.

In terms of biological role, this protein is one of the two subunits of integration host factor, a specific DNA-binding protein that functions in genetic recombination as well as in transcriptional and translational control. The protein is Integration host factor subunit beta of Actinobacillus pleuropneumoniae serotype 7 (strain AP76).